The sequence spans 95 residues: NADH-quinone oxidoreductase subunit 11 (95 aa).

3 helical membrane passes run 1-21, 25-45, and 59-79; these read MSYL…VLTR, ILVF…LVGF, and MVIA…VAIF.

This sequence belongs to the complex I subunit 4L family. As to quaternary structure, NDH-1 is composed of 15 different subunits, Nqo1 to Nqo15. The complex has a L-shaped structure, with the hydrophobic arm (subunits Nqo7, Nqo8 and Nqo10 to Nqo14) embedded in the membrane and the hydrophilic peripheral arm (subunits Nqo1 to Nqo6, Nqo9 and Nqo15) protruding into the bacterial cytoplasm. The hydrophilic domain contains all the redox centers.

It is found in the cell inner membrane. The enzyme catalyses a quinone + NADH + 5 H(+)(in) = a quinol + NAD(+) + 4 H(+)(out). Its function is as follows. NDH-1 shuttles electrons from NADH, via FMN and iron-sulfur (Fe-S) centers, to quinones in the respiratory chain. The immediate electron acceptor for the enzyme in this species is menaquinone. Couples the redox reaction to proton translocation (for every two electrons transferred, four hydrogen ions are translocated across the cytoplasmic membrane), and thus conserves the redox energy in a proton gradient required for the synthesis of ATP. The polypeptide is NADH-quinone oxidoreductase subunit 11 (nqo11) (Thermus thermophilus (strain ATCC 27634 / DSM 579 / HB8)).